The sequence spans 485 residues: Phosphoglucosamine mutase (485 aa).

The Phosphoserine intermediate role is filled by Ser-133. Ser-133, Asp-274, Asp-276, and Asp-278 together coordinate Mg(2+). Residue Ser-133 is modified to Phosphoserine.

Belongs to the phosphohexose mutase family. Mg(2+) is required as a cofactor. Activated by phosphorylation.

The enzyme catalyses alpha-D-glucosamine 1-phosphate = D-glucosamine 6-phosphate. Its function is as follows. Catalyzes the conversion of glucosamine-6-phosphate to glucosamine-1-phosphate. The sequence is that of Phosphoglucosamine mutase from Crocosphaera subtropica (strain ATCC 51142 / BH68) (Cyanothece sp. (strain ATCC 51142)).